The sequence spans 108 residues: U3-lycotoxin-Ls1w (108 aa).

The N-terminal stretch at 1–20 (MKFVLLFGVLLVTLFSYSSA) is a signal peptide. The propeptide occupies 21-44 (EMLDDFDQADEDELLSLIEKEEAR). Disulfide bonds link cysteine 48-cysteine 63, cysteine 55-cysteine 72, cysteine 62-cysteine 87, and cysteine 74-cysteine 85.

The protein belongs to the neurotoxin 19 (CSTX) family. 01 subfamily. Expressed by the venom gland.

The protein localises to the secreted. In Lycosa singoriensis (Wolf spider), this protein is U3-lycotoxin-Ls1w.